Reading from the N-terminus, the 1089-residue chain is Platelet-derived growth factor receptor alpha (1089 aa).

An N-terminal signal peptide occupies residues 1 to 24 (MGTSHQVFLVLSCLLTGPGLISCQ). Ig-like C2-type domains are found at residues 25–113 (LLLP…SEIE), 117–201 (IYIY…FKTS), 202–306 (EFNV…KRVT), 319–410 (PTFG…FELS), and 414–517 (PASI…LKLV). Residues 25 to 528 (LLLPSILPNE…PTLRSELTVA (504 aa)) lie on the Extracellular side of the membrane. Residues Asn42, Asn76, Asn89, Asn103, and Asn179 are each glycosylated (N-linked (GlcNAc...) asparagine). A disulfide bridge links Cys49 with Cys100. 2 disulfides stabilise this stretch: Cys150-Cys189 and Cys235-Cys290. 5 N-linked (GlcNAc...) asparagine glycosylation sites follow: Asn353, Asn359, Asn458, Asn468, and Asn506. Cys435 and Cys501 are oxidised to a cystine. The helical transmembrane segment at 529–549 (AAVLVLLVIVIVSLIVLVVIW) threads the bilayer. The Cytoplasmic portion of the chain corresponds to 550–1089 (KQKPRYEIRW…SSDLVEDSFL (540 aa)). A phosphotyrosine; by autocatalysis mark is found at Tyr572 and Tyr574. The 362-residue stretch at 593–954 (LVLGRILGSG…HLSEIVENLL (362 aa)) folds into the Protein kinase domain. Residues 599–607 (LGSGAFGKV) and Lys627 each bind ATP. Residues Tyr720, Tyr731, Tyr742, Tyr754, Tyr762, and Tyr768 each carry the phosphotyrosine; by autocatalysis modification. Asp818 serves as the catalytic Proton acceptor. Tyr849, Tyr988, and Tyr1018 each carry phosphotyrosine; by autocatalysis. The segment at 1018–1089 (YIIPLPDIDP…SSDLVEDSFL (72 aa)) is disordered. The span at 1041 to 1059 (SSQTSEESAIETGSSSSTF) shows a compositional bias: polar residues. Positions 1065-1089 (ETIEDIDMMDDIGIDSSDLVEDSFL) are enriched in acidic residues.

The protein belongs to the protein kinase superfamily. Tyr protein kinase family. CSF-1/PDGF receptor subfamily. In terms of assembly, interacts with homodimeric PDGFA, PDGFB and PDGFC, and with heterodimers formed by PDGFA and PDGFB. Monomer in the absence of bound ligand. Interaction with dimeric PDGFA, PDGFB and/or PDGFC leads to receptor dimerization, where both PDGFRA homodimers and heterodimers with PDGFRB are observed. Interacts (tyrosine phosphorylated) with SHB (via SH2 domain). Interacts (tyrosine phosphorylated) with SHF (via SH2 domain). Interacts (tyrosine phosphorylated) with SRC (via SH2 domain). Interacts (tyrosine phosphorylated) with PIK3R1. Interacts (tyrosine phosphorylated) with PLCG1 (via SH2 domain). Interacts (tyrosine phosphorylated) with CRK, GRB2 and GRB7. Interacts with CD248; this interaction promotes PDGF receptor signaling pathway. Ubiquitinated, leading to its internalization and degradation. In terms of processing, autophosphorylated on tyrosine residues upon ligand binding. Autophosphorylation occurs in trans, i.e. one subunit of the dimeric receptor phosphorylates tyrosine residues on the other subunit. Phosphorylation at Tyr-731 and Tyr-742 is important for interaction with PIK3R1. Phosphorylation at Tyr-720 and Tyr-754 is important for interaction with PTPN11. Phosphorylation at Tyr-762 is important for interaction with CRK. Phosphorylation at Tyr-572 and Tyr-574 is important for interaction with SRC and SRC family members. Phosphorylation at Tyr-988 and Tyr-1018 is important for interaction with PLCG1. As to expression, focally expressed in cortical interstitial cells and highly expressed in the interstitium of the papillary region. Also expressed by adventitial cells in arterial vessels. Up-regulated in areas of renal fibrosis. In mice with unilateral ureteral obstruction, expression in cortical interstitial cells becomes prominent at day 4 which increases progressively until day 14.

It localises to the cell membrane. The protein resides in the cell projection. Its subcellular location is the cilium. It is found in the golgi apparatus. The enzyme catalyses L-tyrosyl-[protein] + ATP = O-phospho-L-tyrosyl-[protein] + ADP + H(+). Present in an inactive conformation in the absence of bound ligand. Binding of PDGFA and/or PDGFB leads to dimerization and activation by autophosphorylation on tyrosine residues. Inhibited by imatinib, nilotinib and sorafenib. Tyrosine-protein kinase that acts as a cell-surface receptor for PDGFA, PDGFB and PDGFC and plays an essential role in the regulation of embryonic development, cell proliferation, survival and chemotaxis. Depending on the context, promotes or inhibits cell proliferation and cell migration. Plays an important role in the differentiation of bone marrow-derived mesenchymal stem cells. Required for normal skeleton development and cephalic closure during embryonic development. Required for normal development of the mucosa lining the gastrointestinal tract, and for recruitment of mesenchymal cells and normal development of intestinal villi. Plays a role in cell migration and chemotaxis in wound healing. Plays a role in platelet activation, secretion of agonists from platelet granules, and in thrombin-induced platelet aggregation. Binding of its cognate ligands - homodimeric PDGFA, homodimeric PDGFB, heterodimers formed by PDGFA and PDGFB or homodimeric PDGFC -leads to the activation of several signaling cascades; the response depends on the nature of the bound ligand and is modulated by the formation of heterodimers between PDGFRA and PDGFRB. Phosphorylates PIK3R1, PLCG1, and PTPN11. Activation of PLCG1 leads to the production of the cellular signaling molecules diacylglycerol and inositol 1,4,5-trisphosphate, mobilization of cytosolic Ca(2+) and the activation of protein kinase C. Phosphorylates PIK3R1, the regulatory subunit of phosphatidylinositol 3-kinase, and thereby mediates activation of the AKT1 signaling pathway. Mediates activation of HRAS and of the MAP kinases MAPK1/ERK2 and/or MAPK3/ERK1. Promotes activation of STAT family members STAT1, STAT3 and STAT5A and/or STAT5B. Receptor signaling is down-regulated by protein phosphatases that dephosphorylate the receptor and its down-stream effectors, and by rapid internalization of the activated receptor. This Mus musculus (Mouse) protein is Platelet-derived growth factor receptor alpha (Pdgfra).